The following is a 627-amino-acid chain: Membrane protein insertase YidC (627 aa).

The chain crosses the membrane as a helical span at residues 8-28 (LFLALILSMGIWMGVNYFFFP). Residues 33–57 (KKNTETKQTQSDKTSENTKQQITSG) are compositionally biased toward polar residues. Residues 33 to 68 (KKNTETKQTQSDKTSENTKQQITSGKTKESNSADPV) form a disordered region. The segment covering 58–68 (KTKESNSADPV) has biased composition (basic and acidic residues). Helical transmembrane passes span 417–437 (FTIP…KLVF), 488–508 (VGGC…YTAF), 536–556 (AIPY…LMVG), and 575–595 (MLMY…PSGV).

Belongs to the OXA1/ALB3/YidC family. Type 1 subfamily. As to quaternary structure, interacts with the Sec translocase complex via SecD. Specifically interacts with transmembrane segments of nascent integral membrane proteins during membrane integration.

It localises to the cell inner membrane. Functionally, required for the insertion and/or proper folding and/or complex formation of integral membrane proteins into the membrane. Involved in integration of membrane proteins that insert both dependently and independently of the Sec translocase complex, as well as at least some lipoproteins. Aids folding of multispanning membrane proteins. The protein is Membrane protein insertase YidC of Leptospira interrogans serogroup Icterohaemorrhagiae serovar copenhageni (strain Fiocruz L1-130).